The primary structure comprises 149 residues: Large ribosomal subunit protein bL9 (149 aa).

Belongs to the bacterial ribosomal protein bL9 family.

In terms of biological role, binds to the 23S rRNA. The protein is Large ribosomal subunit protein bL9 of Haemophilus influenzae (strain PittGG).